A 38-amino-acid chain; its full sequence is SFGLCRLRRGFCAHGRCRFPSIPIGRCSRFVQCCRRVW.

Disulfide bonds link C5/C33, C12/C27, and C17/C34.

Monomer. Secreted into the stomach cavity.

Its subcellular location is the secreted. Its function is as follows. Has antifungal activity and antibacterial activity against Gram-positive and Gram-negative bacteria. Involved in the process of food preservation in the stomach during the incubation fast. May also be present during infection. The polypeptide is Spheniscin-1 (Aptenodytes patagonicus (King penguin)).